Consider the following 146-residue polypeptide: Ecotin-like protein 1 (146 aa).

The protein belongs to the protease inhibitor I11 (ecotin) family.

This Leishmania major protein is Ecotin-like protein 1 (ISP1).